We begin with the raw amino-acid sequence, 808 residues long: Phospholipase D alpha 1 (808 aa).

The region spanning 1 to 125 (MAQILLHGTL…LEGEEIDKWV (125 aa)) is the C2 domain. Asp-186 is a Ca(2+) binding site. The PLD phosphodiesterase 1 domain occupies 326 to 364 (TMFTHHQKIVVVDSELPSGESEKRRILSFVGGIDLCDGR). Active-site residues include His-331, Lys-333, and Asp-338. His-331 lines the a 1,2-diacyl-sn-glycero-3-phosphate pocket. Residues His-370 and His-404 each coordinate Ca(2+). Gln-520 and His-659 together coordinate a 1,2-diacyl-sn-glycero-3-phosphate. The region spanning 654 to 681 (FMIYVHSKMMIVDDEYIIVGSANINQRS) is the PLD phosphodiesterase 2 domain. Active-site residues include His-659, Lys-661, and Asp-666. Glu-720 lines the Ca(2+) pocket.

Belongs to the phospholipase D family. C2-PLD subfamily. The cofactor is Ca(2+).

The enzyme catalyses a 1,2-diacyl-sn-glycero-3-phosphocholine + H2O = a 1,2-diacyl-sn-glycero-3-phosphate + choline + H(+). Hydrolyzes glycerol-phospholipids at the terminal phosphodiesteric bond. Plays an important role in various cellular processes. This Nicotiana tabacum (Common tobacco) protein is Phospholipase D alpha 1 (PLD1).